The sequence spans 125 residues: MADLAKIVEELSALTVLEAAELSKMLEEKWGVSAAAPVAVAAAAAGGAAAAPAEEQTEFTVVLADAGDKKINVIKEVRGITGLGLKEAKDLVEGAPKTVKEGASKDEAAKIKKALEDAGAKVEVK.

The protein belongs to the bacterial ribosomal protein bL12 family. As to quaternary structure, homodimer. Part of the ribosomal stalk of the 50S ribosomal subunit. Forms a multimeric L10(L12)X complex, where L10 forms an elongated spine to which 2 to 4 L12 dimers bind in a sequential fashion. Binds GTP-bound translation factors.

Functionally, forms part of the ribosomal stalk which helps the ribosome interact with GTP-bound translation factors. Is thus essential for accurate translation. The chain is Large ribosomal subunit protein bL12 from Gluconobacter oxydans (strain 621H) (Gluconobacter suboxydans).